The sequence spans 196 residues: Small ribosomal subunit protein uS4c (196 aa).

Residues 15 to 41 are disordered; sequence LGALPGLTSKRPRSGSDLKNPLRSGKR. The S4 RNA-binding domain maps to 89 to 150; it reads MRLDNILFRL…KQRSKALIQN (62 aa).

It belongs to the universal ribosomal protein uS4 family. As to quaternary structure, part of the 30S ribosomal subunit. Contacts protein S5. The interaction surface between S4 and S5 is involved in control of translational fidelity.

Its subcellular location is the plastid. The protein localises to the chloroplast. Its function is as follows. One of the primary rRNA binding proteins, it binds directly to 16S rRNA where it nucleates assembly of the body of the 30S subunit. In terms of biological role, with S5 and S12 plays an important role in translational accuracy. In Narcissus odorus (Campernelle jonquil), this protein is Small ribosomal subunit protein uS4c (rps4).